The chain runs to 213 residues: Uridine kinase (213 aa).

15–22 (GASASGKS) provides a ligand contact to ATP.

The protein belongs to the uridine kinase family.

It is found in the cytoplasm. It catalyses the reaction uridine + ATP = UMP + ADP + H(+). The catalysed reaction is cytidine + ATP = CMP + ADP + H(+). Its pathway is pyrimidine metabolism; CTP biosynthesis via salvage pathway; CTP from cytidine: step 1/3. It participates in pyrimidine metabolism; UMP biosynthesis via salvage pathway; UMP from uridine: step 1/1. This is Uridine kinase from Erwinia tasmaniensis (strain DSM 17950 / CFBP 7177 / CIP 109463 / NCPPB 4357 / Et1/99).